A 271-amino-acid polypeptide reads, in one-letter code: ATP synthase subunit a (271 aa).

Helical transmembrane passes span 38 to 58, 100 to 120, 146 to 166, 220 to 240, and 242 to 262; these read FWTL…LFLV, LIAP…LMDL, DVNI…FYSI, LIFI…LNVP, and AIFH…LTIV.

This sequence belongs to the ATPase A chain family. As to quaternary structure, F-type ATPases have 2 components, CF(1) - the catalytic core - and CF(0) - the membrane proton channel. CF(1) has five subunits: alpha(3), beta(3), gamma(1), delta(1), epsilon(1). CF(0) has three main subunits: a(1), b(2) and c(9-12). The alpha and beta chains form an alternating ring which encloses part of the gamma chain. CF(1) is attached to CF(0) by a central stalk formed by the gamma and epsilon chains, while a peripheral stalk is formed by the delta and b chains.

The protein resides in the cell inner membrane. Functionally, key component of the proton channel; it plays a direct role in the translocation of protons across the membrane. The chain is ATP synthase subunit a from Salmonella arizonae (strain ATCC BAA-731 / CDC346-86 / RSK2980).